Here is a 394-residue protein sequence, read N- to C-terminus: Chorismate synthase (394 aa).

The NADP(+) site is built by arginine 40 and arginine 46. FMN-binding positions include 135-137 (RAS) and 255-256 (QA). Residues 270 to 291 (RRRGSGAHDEIEPAGAGSRRVR) are disordered. FMN contacts are provided by residues glycine 302, 317–321 (KPISS), and arginine 343.

This sequence belongs to the chorismate synthase family. As to quaternary structure, homotetramer. The cofactor is FMNH2.

The catalysed reaction is 5-O-(1-carboxyvinyl)-3-phosphoshikimate = chorismate + phosphate. The protein operates within metabolic intermediate biosynthesis; chorismate biosynthesis; chorismate from D-erythrose 4-phosphate and phosphoenolpyruvate: step 7/7. Catalyzes the anti-1,4-elimination of the C-3 phosphate and the C-6 proR hydrogen from 5-enolpyruvylshikimate-3-phosphate (EPSP) to yield chorismate, which is the branch point compound that serves as the starting substrate for the three terminal pathways of aromatic amino acid biosynthesis. This reaction introduces a second double bond into the aromatic ring system. The chain is Chorismate synthase from Frankia casuarinae (strain DSM 45818 / CECT 9043 / HFP020203 / CcI3).